A 285-amino-acid polypeptide reads, in one-letter code: 2-dehydro-3-deoxyphosphooctonate aldolase (285 aa).

It belongs to the KdsA family.

It is found in the cytoplasm. The enzyme catalyses D-arabinose 5-phosphate + phosphoenolpyruvate + H2O = 3-deoxy-alpha-D-manno-2-octulosonate-8-phosphate + phosphate. It participates in carbohydrate biosynthesis; 3-deoxy-D-manno-octulosonate biosynthesis; 3-deoxy-D-manno-octulosonate from D-ribulose 5-phosphate: step 2/3. The protein operates within bacterial outer membrane biogenesis; lipopolysaccharide biosynthesis. The polypeptide is 2-dehydro-3-deoxyphosphooctonate aldolase (Albidiferax ferrireducens (strain ATCC BAA-621 / DSM 15236 / T118) (Rhodoferax ferrireducens)).